A 512-amino-acid polypeptide reads, in one-letter code: Kelch repeat protein C2 (512 aa).

In terms of domain architecture, BTB spans 2–67 (ESVIFSINGE…MRWKKINITI (66 aa)). The BACK domain occupies 102–176 (CIRMFNFSKR…LLKWIHKNPN (75 aa)). 6 Kelch repeats span residues 216–261 (IKHN…LHNC), 262–307 (LYII…VNNG), 309–354 (LYVI…FVND), 356–403 (IYVM…EYDG), 405–449 (IYVI…SCGD), and 452–498 (LIIA…THKS).

Belongs to the poxviruses Kelch family.

This Rabbitpox virus (strain Utrecht) (RPV) protein is Kelch repeat protein C2.